Reading from the N-terminus, the 408-residue chain is Glutaryl-CoA dehydrogenase, mitochondrial (408 aa).

The transit peptide at 1–13 (KGGKTQGRSAKSS) directs the protein to the mitochondrion. Substrate contacts are provided by residues 107 to 108 (RS) and Ser-156. FAD-binding positions include 147 to 156 (FGLTEPNHGS), Ser-156, and 182 to 184 (WIT). Lys-210 is subject to N6-acetyllysine. 257–264 (FGCLNNAR) contacts substrate. FAD-binding positions include Arg-289, Gln-300, and 357-361 (DMLGG). Glu-384 serves as the catalytic Proton acceptor. Gly-385 is a substrate binding site. FAD-binding positions include Thr-386, 386–388 (THD), and Phe-404.

It belongs to the acyl-CoA dehydrogenase family. As to quaternary structure, homotetramer. FAD is required as a cofactor.

Its subcellular location is the mitochondrion matrix. The enzyme catalyses glutaryl-CoA + oxidized [electron-transfer flavoprotein] + 2 H(+) = (2E)-butenoyl-CoA + reduced [electron-transfer flavoprotein] + CO2. It functions in the pathway amino-acid metabolism; lysine degradation. It participates in amino-acid metabolism; tryptophan metabolism. Its function is as follows. Catalyzes the oxidative decarboxylation of glutaryl-CoA to crotonyl-CoA and CO(2) in the degradative pathway of L-lysine, L-hydroxylysine, and L-tryptophan metabolism. It uses electron transfer flavoprotein as its electron acceptor. The sequence is that of Glutaryl-CoA dehydrogenase, mitochondrial (GCDH) from Sus scrofa (Pig).